The sequence spans 264 residues: MRQYLQLLEDILENGVEKDDRTGVGTLSVFGRQLRFNLQEGFPLLTTKKLHIRSIIYELLWFLKGDTNVRYLQENGVTIWDEWADENGDLGPIYGAQWRSWKGADGKTVDQISWVIEEIKRNPNSRRLLVSAWNVAELDKMKLPPCHYAFQFYVADGKLSCMWQQRSVDTFLGLPFNIASYALLTHMIAQQCDLDVGELIFSGGDVHLYKNHLEQAKLQLTREPRPLPKLVIKRKPASIFEYEFEDFEIVDYDPHPHIKAPVAV.

Arg21 serves as a coordination point for dUMP. His51 is a binding site for (6R)-5,10-methylene-5,6,7,8-tetrahydrofolate. 126-127 (RR) provides a ligand contact to dUMP. Cys146 serves as the catalytic Nucleophile. DUMP-binding positions include 166–169 (RSVD), Asn177, and 207–209 (HLY). Asp169 is a binding site for (6R)-5,10-methylene-5,6,7,8-tetrahydrofolate. (6R)-5,10-methylene-5,6,7,8-tetrahydrofolate is bound at residue Ala263.

It belongs to the thymidylate synthase family. Bacterial-type ThyA subfamily. In terms of assembly, homodimer.

The protein resides in the cytoplasm. The enzyme catalyses dUMP + (6R)-5,10-methylene-5,6,7,8-tetrahydrofolate = 7,8-dihydrofolate + dTMP. It functions in the pathway pyrimidine metabolism; dTTP biosynthesis. Its function is as follows. Catalyzes the reductive methylation of 2'-deoxyuridine-5'-monophosphate (dUMP) to 2'-deoxythymidine-5'-monophosphate (dTMP) while utilizing 5,10-methylenetetrahydrofolate (mTHF) as the methyl donor and reductant in the reaction, yielding dihydrofolate (DHF) as a by-product. This enzymatic reaction provides an intracellular de novo source of dTMP, an essential precursor for DNA biosynthesis. This Geobacillus sp. (strain WCH70) protein is Thymidylate synthase.